The sequence spans 593 residues: Pyruvate kinase isozyme A, chloroplastic (593 aa).

The interval 57–94 is disordered; it reads DEPQSSPVLVSENGSGGVLSSATQEYGRNAAPGTDSSS. Arg-144 provides a ligand contact to substrate. K(+) contacts are provided by Asn-146, Asp-178, and Thr-179. Residue 146–149 participates in ATP binding; the sequence is NMCH. Glu-343 is a binding site for Mg(2+). Residues Gly-366, Asp-367, and Ser-399 each coordinate substrate. Position 367 (Asp-367) interacts with Mg(2+).

Belongs to the pyruvate kinase family. Mg(2+) is required as a cofactor. Requires K(+) as cofactor. Highest levels in roots. Also found in stems, leaves and flowers.

Its subcellular location is the plastid. It is found in the chloroplast. The enzyme catalyses pyruvate + ATP = phosphoenolpyruvate + ADP + H(+). The protein operates within carbohydrate degradation; glycolysis; pyruvate from D-glyceraldehyde 3-phosphate: step 5/5. This chain is Pyruvate kinase isozyme A, chloroplastic, found in Nicotiana tabacum (Common tobacco).